The following is a 257-amino-acid chain: Uridylate kinase (257 aa).

8–11 (KLSG) contributes to the ATP binding site. The tract at residues 21 to 26 (GSAGFG) is involved in allosteric activation by GTP. Residue Gly56 participates in UMP binding. 2 residues coordinate ATP: Gly57 and Arg61. UMP is bound by residues Asp75 and 136-143 (NGAPFFTT). ATP contacts are provided by Asn164, Tyr170, and Asp173.

This sequence belongs to the UMP kinase family. Homohexamer.

It is found in the cytoplasm. It carries out the reaction UMP + ATP = UDP + ADP. It functions in the pathway pyrimidine metabolism; CTP biosynthesis via de novo pathway; UDP from UMP (UMPK route): step 1/1. Its activity is regulated as follows. Allosterically activated by GTP. Inhibited by UTP. In terms of biological role, catalyzes the reversible phosphorylation of UMP to UDP. This Deinococcus geothermalis (strain DSM 11300 / CIP 105573 / AG-3a) protein is Uridylate kinase.